The following is a 3381-amino-acid chain: Versican core protein (3381 aa).

The N-terminal stretch at 1-20 (MLINIKSILWMCSTLIAAHA) is a signal peptide. Residues 21 to 147 (LQKVNMEKSP…EDTQDTVSLT (127 aa)) form the Ig-like V-type domain. Cystine bridges form between Cys-44–Cys-131, Cys-173–Cys-244, Cys-197–Cys-218, Cys-271–Cys-346, and Cys-295–Cys-316. N-linked (GlcNAc...) asparagine glycosylation occurs at Asn-57. Link domains are found at residues 151 to 246 (VVFH…YCYV) and 252 to 348 (DVFH…YCFK). Asn-331 and Asn-352 each carry an N-linked (GlcNAc...) asparagine glycan. The interval 349-1336 (PKQNISEATT…IIEVRENKTG (988 aa)) is GAG-alpha (glucosaminoglycan attachment domain). A compositionally biased stretch (polar residues) spans 417–427 (PLTSTHRSATE). 2 disordered regions span residues 417–437 (PLTS…SMKK) and 603–623 (ESVS…MDHR). O-linked (Xyl...) (chondroitin sulfate) serine glycosylation is present at Ser-660. The tract at residues 816–866 (DNTTSKPLGSTEHVGSPKLPPALITTTGVSGKDKEMPSLTEDGRDEFTRIP) is disordered. N-linked (GlcNAc...) asparagine glycosylation occurs at Asn-817. A compositionally biased stretch (basic and acidic residues) spans 846–863 (GKDKEMPSLTEDGRDEFT). Residues Asn-965 and Asn-1017 are each glycosylated (N-linked (GlcNAc...) asparagine). The segment covering 1043-1052 (EDFLWKEQTP) has biased composition (basic and acidic residues). Disordered regions lie at residues 1043-1081 (EDFL…SDGS) and 1218-1244 (FSSA…PDEE). Residue Asn-1333 is glycosylated (N-linked (GlcNAc...) asparagine). The GAG-beta stretch occupies residues 1337–3074 (RMSDFSVSGH…VEGTAVYLPG (1738 aa)). The disordered stretch occupies residues 1338 to 1362 (MSDFSVSGHPIDSESKEDEPCSEET). Residues 1352-1362 (SKEDEPCSEET) show a composition bias toward acidic residues. Asn-1393 carries N-linked (GlcNAc...) asparagine glycosylation. Basic and acidic residues predominate over residues 1417 to 1428 (KDPEAAEARRGQ). Disordered stretches follow at residues 1417 to 1446 (KDPE…ESDS), 1455 to 1474 (GLPT…SLEI), and 1484 to 1512 (TAEP…GPDS). 2 N-linked (GlcNAc...) asparagine glycosylation sites follow: Asn-1437 and Asn-1463. O-linked (Xyl...) (chondroitin sulfate) serine glycans are attached at residues Ser-1539 and Ser-1621. Asn-1653 carries an N-linked (GlcNAc...) asparagine glycan. Residues 1708-1785 (PPLEETTRKE…ERETTSSTVV (78 aa)) are disordered. Residues 1712–1721 (ETTRKEEEKG) show a composition bias toward basic and acidic residues. Residues 1726 to 1738 (ASTVEVHSPTQRL) are compositionally biased toward polar residues. A compositionally biased stretch (low complexity) spans 1743–1761 (SPSELESSSETPPDDSAAA). Over residues 1764 to 1784 (KSFTSQMTPTQSERETTSSTV) the composition is skewed to polar residues. 2 O-linked (Xyl...) (chondroitin sulfate) serine glycosylation sites follow: Ser-1928 and Ser-1952. Positions 1964 to 1976 (PSVTPTSDLSNHT) are enriched in polar residues. Disordered regions lie at residues 1964 to 1986 (PSVT…GSTL) and 2041 to 2126 (EGAI…QSSV). 4 N-linked (GlcNAc...) asparagine glycosylation sites follow: Asn-1974, Asn-2045, Asn-2074, and Asn-2103. Basic and acidic residues predominate over residues 2065-2075 (STEEGEVKENH). Ser-2109 carries the post-translational modification Phosphoserine. O-linked (Xyl...) (chondroitin sulfate) serine glycosylation is found at Ser-2240 and Ser-2247. 3 N-linked (GlcNAc...) asparagine glycosylation sites follow: Asn-2263, Asn-2290, and Asn-2356. 3 disordered regions span residues 2338–2388 (EGPF…AETK), 2490–2512 (EQRE…EKAT), and 2594–2615 (TDLD…TQVQ). Composition is skewed to polar residues over residues 2345-2357 (LTFS…PQNQ) and 2367-2383 (TSRP…ENSV). 2 positions are modified to phosphoserine: Ser-2607 and Ser-2608. A Phosphothreonine modification is found at Thr-2612. 2 N-linked (GlcNAc...) asparagine glycosylation sites follow: Asn-2623 and Asn-2641. O-linked (Xyl...) (chondroitin sulfate) serine glycans are attached at residues Ser-2714, Ser-2715, and Ser-2759. Residues 2819-2893 (PPLSIHLGSG…EPSEDESKPK (75 aa)) are disordered. The span at 2840–2851 (ALPSTDASTPPV) shows a compositional bias: polar residues. N-linked (GlcNAc...) asparagine glycosylation is found at Asn-2919 and Asn-3052. Positions 3074–3110 (GPDRCKMNPCLNGGTCYPTETSYVCTCVPGYSGDRCE) constitute an EGF-like 1 domain. 11 cysteine pairs are disulfide-bonded: Cys-3078–Cys-3089, Cys-3083–Cys-3098, Cys-3100–Cys-3109, Cys-3116–Cys-3127, Cys-3121–Cys-3136, Cys-3138–Cys-3147, Cys-3154–Cys-3165, Cys-3182–Cys-3274, Cys-3250–Cys-3266, Cys-3281–Cys-3324, and Cys-3310–Cys-3337. Residues 3112-3148 (DFDECHSNPCRNGATCIDGFNTFRCLCLPSYVGALCE) form the EGF-like 2; calcium-binding domain. Residues 3161–3275 (FQGQCYKYFA…CNYHLTYTCK (115 aa)) form the C-type lectin domain. One can recognise a Sushi domain in the interval 3279–3339 (VACGQPPVVE…WAMPKITCLN (61 aa)). N-linked (GlcNAc...) asparagine glycans are attached at residues Asn-3354 and Asn-3364. Positions 3355–3365 (SSSAKDNSINT) are enriched in polar residues. The disordered stretch occupies residues 3355-3381 (SSSAKDNSINTSKHDHRWSRRWQESRR).

Belongs to the aggrecan/versican proteoglycan family. Interacts with FBLN1. Phosphorylated by FAM20C in the extracellular medium. Post-translationally, proteolytically cleaved by ADAMTS5 and ADAMTS15 in the pericellular matrix surrounding myoblasts, facilitating myoblast contact and fusion which is required for skeletal muscle development and regeneration. Cerebral white matter. Isoform V0 and isoform V1 are expressed in the central nervous system, and in a number of mesenchymal and epithelial tissues; the major isoform V2 is restricted to the central nervous system.

The protein localises to the secreted. It is found in the extracellular space. It localises to the extracellular matrix. Its subcellular location is the cell projection. The protein resides in the cilium. The protein localises to the photoreceptor outer segment. It is found in the interphotoreceptor matrix. Functionally, may play a role in intercellular signaling and in connecting cells with the extracellular matrix. May take part in the regulation of cell motility, growth and differentiation. Binds hyaluronic acid. In Bos taurus (Bovine), this protein is Versican core protein (VCAN).